The primary structure comprises 442 residues: tRNA modification GTPase MnmE (442 aa).

Residues R27, E84, and K124 each contribute to the (6S)-5-formyl-5,6,7,8-tetrahydrofolate site. The TrmE-type G domain occupies 221–366 (GLHVVIVGAP…LLDALQAFAE (146 aa)). Residues 231-236 (NAGKSS), 250-256 (SEEAGTT), and 275-278 (DTAG) each bind GTP. Residues S235 and T256 each coordinate Mg(2+). K442 serves as a coordination point for (6S)-5-formyl-5,6,7,8-tetrahydrofolate.

Belongs to the TRAFAC class TrmE-Era-EngA-EngB-Septin-like GTPase superfamily. TrmE GTPase family. As to quaternary structure, homodimer. Heterotetramer of two MnmE and two MnmG subunits. It depends on K(+) as a cofactor.

It is found in the cytoplasm. Functionally, exhibits a very high intrinsic GTPase hydrolysis rate. Involved in the addition of a carboxymethylaminomethyl (cmnm) group at the wobble position (U34) of certain tRNAs, forming tRNA-cmnm(5)s(2)U34. In Brucella melitensis biotype 1 (strain ATCC 23456 / CCUG 17765 / NCTC 10094 / 16M), this protein is tRNA modification GTPase MnmE.